The following is a 69-amino-acid chain: MSKLGVVLFVFLLLLPLAAPQPVGDQPADQPADRNAEARGTYLYPFSYYRLWRYFTRFLHKQPYYYVHI.

An N-terminal signal peptide occupies residues 1–20; it reads MSKLGVVLFVFLLLLPLAAP. A propeptide spanning residues 21-69 is cleaved from the precursor; the sequence is QPVGDQPADQPADRNAEARGTYLYPFSYYRLWRYFTRFLHKQPYYYVHI.

This sequence belongs to the conotoxin M superfamily. Conopeptide Y family. In terms of tissue distribution, expressed by the venom duct.

It is found in the secreted. Its function is as follows. Tyrosine-rich conopeptide that specifically targets voltage-gated potassium channel Kv1.6/KCNA6 (IC(50) is 8.8 uM) that is expressed in Xenopus oocytes. In vivo, causes seizures (at 5 nmol) and death (20 nmol) when intracranially injected into mice, and causes paralysis (at 10 pmol) to C.elegans. This chain is Conopeptide Y-Fe1, found in Conus ferrugineus (Cone snail).